The following is a 235-amino-acid chain: Ribonuclease 3 (235 aa).

Residues 7-135 enclose the RNase III domain; sequence FAALEARLGH…VVAAVYLDGG (129 aa). Residue glutamate 48 coordinates Mg(2+). The active site involves aspartate 52. Residues aspartate 121 and glutamate 124 each contribute to the Mg(2+) site. The active site involves glutamate 124. The DRBM domain occupies 160-229; the sequence is DPKTVLQEWA…ASAFLAREGV (70 aa).

The protein belongs to the ribonuclease III family. In terms of assembly, homodimer. Mg(2+) is required as a cofactor.

Its subcellular location is the cytoplasm. It carries out the reaction Endonucleolytic cleavage to 5'-phosphomonoester.. Digests double-stranded RNA. Involved in the processing of primary rRNA transcript to yield the immediate precursors to the large and small rRNAs (23S and 16S). Processes some mRNAs, and tRNAs when they are encoded in the rRNA operon. Processes pre-crRNA and tracrRNA of type II CRISPR loci if present in the organism. The polypeptide is Ribonuclease 3 (Azorhizobium caulinodans (strain ATCC 43989 / DSM 5975 / JCM 20966 / LMG 6465 / NBRC 14845 / NCIMB 13405 / ORS 571)).